A 438-amino-acid chain; its full sequence is Leupeptin-inactivating enzyme 1 (438 aa).

An N-terminal signal peptide occupies residues 1 to 37 (MSLSVSRRLAAVTAFAVAGLFASAVPAALAAPSAVAA). Zn(2+)-binding residues include His125 and Asp137. Glu171 serves as the catalytic Proton acceptor. Zn(2+) is bound by residues Glu172, Asp200, and His287. An intrachain disulfide couples Cys285 to Cys290. The P/Homo B domain maps to 321-438 (VPPGQSFENT…GYINSWKITF (118 aa)).

Belongs to the peptidase M28 family. M28A subfamily. Monomer. It depends on Zn(2+) as a cofactor.

Its subcellular location is the secreted. Activity is inhibited by metalloprotease inhibitors and activated by Mg(2+) and Ca(2+). In terms of biological role, a leucine-specific metalloprotease that plays a role in controlling the amount of leupeptin during colony development. Degrades leupeptin into three components, acetyl-leucine, leucine and argininal. Has a strict preference for leucine at the P1 site. This Streptomyces exfoliatus (Streptomyces hydrogenans) protein is Leupeptin-inactivating enzyme 1 (lieA).